Reading from the N-terminus, the 331-residue chain is D-alanine--D-alanine ligase (331 aa).

The 203-residue stretch at 112 to 314 folds into the ATP-grasp domain; it reads KRIWRSEGLP…YEDLCLRLLA (203 aa). ATP is bound at residue 138–193; sequence LQTLGAPMIVKPAREGSTIGLSKVHQAQQCASAYLLAARYDPEVLCEQFIAGDELT. Aspartate 267, glutamate 281, and asparagine 283 together coordinate Mg(2+).

It belongs to the D-alanine--D-alanine ligase family. Mg(2+) is required as a cofactor. It depends on Mn(2+) as a cofactor.

Its subcellular location is the cytoplasm. The enzyme catalyses 2 D-alanine + ATP = D-alanyl-D-alanine + ADP + phosphate + H(+). The protein operates within cell wall biogenesis; peptidoglycan biosynthesis. Its function is as follows. Cell wall formation. The protein is D-alanine--D-alanine ligase of Verminephrobacter eiseniae (strain EF01-2).